The chain runs to 219 residues: Probable nicotinate-nucleotide adenylyltransferase (219 aa).

Belongs to the NadD family.

It catalyses the reaction nicotinate beta-D-ribonucleotide + ATP + H(+) = deamido-NAD(+) + diphosphate. Its pathway is cofactor biosynthesis; NAD(+) biosynthesis; deamido-NAD(+) from nicotinate D-ribonucleotide: step 1/1. Catalyzes the reversible adenylation of nicotinate mononucleotide (NaMN) to nicotinic acid adenine dinucleotide (NaAD). The polypeptide is Probable nicotinate-nucleotide adenylyltransferase (Pseudomonas putida (strain W619)).